Reading from the N-terminus, the 697-residue chain is Gametogenetin-binding protein 2 (697 aa).

At Ser360 the chain carries Phosphoserine.

In terms of assembly, interacts with GGN. In terms of tissue distribution, expressed in heart, brain, placenta, lung, liver, skeletal muscle, kidney and pancreas. Expressed more abundantly in heart, pancreas and skeletal muscle.

The protein localises to the cytoplasmic vesicle. Functionally, may be involved in spermatogenesis. This chain is Gametogenetin-binding protein 2 (GGNBP2), found in Homo sapiens (Human).